We begin with the raw amino-acid sequence, 1521 residues long: Protein OPAQUE1 (1521 aa).

One can recognise a Myosin N-terminal SH3-like domain in the interval 4–53; that stretch reads RKGLKVWVEEKGEGWVEAEVVEAKERAVVVFSSQRKKITVSPEKLLPRDT. The region spanning 60 to 731 is the Myosin motor domain; that stretch reads GHVDDMTKLT…QIAILDMRRA (672 aa). Residues 155–162 and 208–216 contribute to the ATP site; these read GESGAGKT and NDNSSRFGK. 4 actin-binding regions span residues 493 to 527, 529 to 552, 587 to 612, and 612 to 634; these read LIEK…FRNF, SHLR…AGKV, FTSL…KLQL, and LQAL…KPNS. IQ domains follow at residues 733 to 755, 756 to 778, 781 to 803, 804 to 826, 829 to 851, and 852 to 874; these read ILDN…KEFV, KTRE…KMFA, RETA…RAHL, QACL…RYFS, REHK…ILFQ, and NYRQ…KELR. 2 coiled-coil regions span residues 870–910 and 974–1050; these read RKEL…ERRL and SAEA…LRQK. The Dilute domain maps to 1162-1459; sequence DHVIEAINDV…VAAMREMVNK (298 aa).

Belongs to the TRAFAC class myosin-kinesin ATPase superfamily. Myosin family. Plant myosin class XI subfamily. In terms of assembly, interacts (via C-terminus) with HIP (via C-terminus), but not with zeins, FL1 or intrinsic proteins of protein bodies. In terms of tissue distribution, high expression in kernels and stems, intermediate in ears and leaves, and low in roots, silks and tassels.

Its subcellular location is the cytoplasm. Functionally, myosin XI motor protein required for endoplasmic reticulum motility and protein body formation. May function by binding with its tail domain to receptor proteins on membranes and exerting force with its N-terminal motor domain against actin filaments, thereby transporting its cargo along polarized actin cables. This chain is Protein OPAQUE1, found in Zea mays (Maize).